Reading from the N-terminus, the 155-residue chain is DNA gyrase inhibitor (155 aa).

This sequence belongs to the DNA gyrase inhibitor family. As to quaternary structure, interacts with DNA gyrase.

Its subcellular location is the cytoplasm. Inhibits the supercoiling activity of DNA gyrase. Acts by inhibiting DNA gyrase at an early step, prior to (or at the step of) binding of DNA by the gyrase. It protects cells against toxins that target DNA gyrase, by inhibiting activity of these toxins and reducing the formation of lethal double-strand breaks in the cell. This chain is DNA gyrase inhibitor, found in Salmonella typhi.